Here is an 86-residue protein sequence, read N- to C-terminus: Exodeoxyribonuclease 7 small subunit (86 aa).

A disordered region spans residues 1 to 26; it reads MQDELFETEKAPQKNTKNAKNAPKKS.

It belongs to the XseB family. In terms of assembly, heterooligomer composed of large and small subunits.

It is found in the cytoplasm. It catalyses the reaction Exonucleolytic cleavage in either 5'- to 3'- or 3'- to 5'-direction to yield nucleoside 5'-phosphates.. Bidirectionally degrades single-stranded DNA into large acid-insoluble oligonucleotides, which are then degraded further into small acid-soluble oligonucleotides. The polypeptide is Exodeoxyribonuclease 7 small subunit (Helicobacter pylori (strain HPAG1)).